The primary structure comprises 65 residues: Large ribosomal subunit protein bL33m (65 aa).

This sequence belongs to the bacterial ribosomal protein bL33 family. As to quaternary structure, component of the mitochondrial ribosome large subunit (39S) which comprises a 16S rRNA and about 50 distinct proteins.

It localises to the mitochondrion. The protein is Large ribosomal subunit protein bL33m (mRpL33) of Anopheles gambiae (African malaria mosquito).